A 1473-amino-acid polypeptide reads, in one-letter code: Sulfite reductase [NADPH] subunit beta (1473 aa).

In terms of domain architecture, Flavodoxin-like spans 728–876; that stretch reads LTILFASDGG…AYNLWEPELW (149 aa). [4Fe-4S] cluster contacts are provided by C1328, C1334, C1373, and C1377. C1377 lines the siroheme pocket.

Belongs to the nitrite and sulfite reductase 4Fe-4S domain family. Alpha(2)-beta(2). The alpha component is a flavoprotein, the beta component is a hemoprotein. Siroheme serves as cofactor. Requires [4Fe-4S] cluster as cofactor.

It localises to the cytoplasm. The catalysed reaction is hydrogen sulfide + 3 NADP(+) + 3 H2O = sulfite + 3 NADPH + 4 H(+). It participates in sulfur metabolism; hydrogen sulfide biosynthesis; hydrogen sulfide from sulfite (NADPH route): step 1/1. Its function is as follows. Catalyzes the reduction of sulfite to sulfide, one of several activities required for the biosynthesis of L-cysteine from sulfate. This is Sulfite reductase [NADPH] subunit beta (sir1) from Schizosaccharomyces pombe (strain 972 / ATCC 24843) (Fission yeast).